A 165-amino-acid chain; its full sequence is ATP synthase subunit b (165 aa).

A helical membrane pass occupies residues 7–27; it reads GTSLGNLLIVTGSFILLLLLV.

It belongs to the ATPase B chain family. As to quaternary structure, F-type ATPases have 2 components, F(1) - the catalytic core - and F(0) - the membrane proton channel. F(1) has five subunits: alpha(3), beta(3), gamma(1), delta(1), epsilon(1). F(0) has three main subunits: a(1), b(2) and c(10-14). The alpha and beta chains form an alternating ring which encloses part of the gamma chain. F(1) is attached to F(0) by a central stalk formed by the gamma and epsilon chains, while a peripheral stalk is formed by the delta and b chains.

The protein resides in the cell membrane. In terms of biological role, f(1)F(0) ATP synthase produces ATP from ADP in the presence of a proton or sodium gradient. F-type ATPases consist of two structural domains, F(1) containing the extramembraneous catalytic core and F(0) containing the membrane proton channel, linked together by a central stalk and a peripheral stalk. During catalysis, ATP synthesis in the catalytic domain of F(1) is coupled via a rotary mechanism of the central stalk subunits to proton translocation. Functionally, component of the F(0) channel, it forms part of the peripheral stalk, linking F(1) to F(0). This chain is ATP synthase subunit b, found in Streptococcus mutans serotype c (strain ATCC 700610 / UA159).